Consider the following 123-residue polypeptide: Small ribosomal subunit protein uS12 (123 aa).

The segment at 9-28 (RNGRKRATKKTTTPALKGAP) is disordered. Residues 18–27 (KTTTPALKGA) are compositionally biased toward low complexity. Asp89 is subject to 3-methylthioaspartic acid.

Belongs to the universal ribosomal protein uS12 family. In terms of assembly, part of the 30S ribosomal subunit. Contacts proteins S8 and S17. May interact with IF1 in the 30S initiation complex.

Functionally, with S4 and S5 plays an important role in translational accuracy. Its function is as follows. Interacts with and stabilizes bases of the 16S rRNA that are involved in tRNA selection in the A site and with the mRNA backbone. Located at the interface of the 30S and 50S subunits, it traverses the body of the 30S subunit contacting proteins on the other side and probably holding the rRNA structure together. The combined cluster of proteins S8, S12 and S17 appears to hold together the shoulder and platform of the 30S subunit. This is Small ribosomal subunit protein uS12 from Desulfosudis oleivorans (strain DSM 6200 / JCM 39069 / Hxd3) (Desulfococcus oleovorans).